A 385-amino-acid polypeptide reads, in one-letter code: Pectate lyase E (385 aa).

The N-terminal stretch at 1-30 (MKNTRVRSIGTKSLLAAVVTAALMATSAYA) is a signal peptide. Ca(2+) is bound at residue D164. Residues 177-182 (DHVTIS) form repeat 1. Residues 177–218 (DHVTISDGSFTDDKYTTKDGEKYVQHDGALDIKKGSDYVTIS) form a 2 X 6 AA approximate repeats region. D207 lines the Ca(2+) pocket. Repeat unit 2 spans residues 213–218 (DYVTIS). The active site involves R260.

Belongs to the polysaccharide lyase 1 family. PLBC subfamily. Ca(2+) serves as cofactor.

It is found in the secreted. It catalyses the reaction Eliminative cleavage of (1-&gt;4)-alpha-D-galacturonan to give oligosaccharides with 4-deoxy-alpha-D-galact-4-enuronosyl groups at their non-reducing ends.. It participates in glycan metabolism; pectin degradation; 2-dehydro-3-deoxy-D-gluconate from pectin: step 2/5. In terms of biological role, involved in maceration and soft-rotting of plant tissue. The chain is Pectate lyase E (pelE) from Dickeya chrysanthemi (Pectobacterium chrysanthemi).